A 319-amino-acid chain; its full sequence is 1-aminocyclopropane-1-carboxylate oxidase 1 (319 aa).

Residues P153–P253 form the Fe2OG dioxygenase domain. H177, D179, and H234 together coordinate Fe cation.

The protein belongs to the iron/ascorbate-dependent oxidoreductase family. The cofactor is Fe cation.

The catalysed reaction is 1-aminocyclopropane-1-carboxylate + L-ascorbate + O2 = ethene + L-dehydroascorbate + hydrogen cyanide + CO2 + 2 H2O. The protein operates within alkene biosynthesis; ethylene biosynthesis via S-adenosyl-L-methionine; ethylene from S-adenosyl-L-methionine: step 2/2. In Petunia hybrida (Petunia), this protein is 1-aminocyclopropane-1-carboxylate oxidase 1 (ACO1).